Here is a 74-residue protein sequence, read N- to C-terminus: MEKLTILLLVAAVLMWTQALIQEKRPKEKIKFLSKRKTTAESWWEGECSGWSVYCTQHSECCSGECTGNYCELF.

The signal sequence occupies residues 1-19; that stretch reads MEKLTILLLVAAVLMWTQA. The propeptide occupies 20–46; sequence LIQEKRPKEKIKFLSKRKTTAESWWEG. 3 disulfides stabilise this stretch: Cys48-Cys62, Cys55-Cys66, and Cys61-Cys71.

Belongs to the conotoxin O2 superfamily. As to expression, expressed by the venom duct.

It localises to the secreted. The polypeptide is Conotoxin VnMEKL-0221 (Conus ventricosus (Mediterranean cone)).